Here is a 331-residue protein sequence, read N- to C-terminus: (+)-aristolochene synthase TS1 (331 aa).

The disordered stretch occupies residues 1-22 (MTRMKNSSSNVTSASGSGSGSG). A compositionally biased stretch (low complexity) spans 7-16 (SSSNVTSASG). The Mg(2+) site is built by Asp102, Asn231, Ser235, and Glu239. A DDxx(x)D/E motif motif is present at residues 102–106 (DDLLE). The NDxxSxxxD/E motif signature appears at 231–239 (NDVYSYEKE). Positions 326 and 327 each coordinate (2E,6E)-farnesyl diphosphate.

It belongs to the terpene synthase family. As to quaternary structure, homodimer. Mg(2+) serves as cofactor.

The catalysed reaction is (2E,6E)-farnesyl diphosphate = (+)-aristolochene + diphosphate. The protein operates within sesquiterpene biosynthesis; aristolochene biosynthesis; aristolochene from farnesyl diphosphate: step 1/1. Its function is as follows. Catalyzes the cyclization of trans,trans-farnesyl diphosphate (FPP) to the bicyclic sesquiterpene aristolochene. Aristolochene is the likely parent compound for a number of sesquiterpenoid toxins produced by filamentous fungi. In Penicillium expansum (Blue mold rot fungus), this protein is (+)-aristolochene synthase TS1.